A 423-amino-acid polypeptide reads, in one-letter code: Zinc-type alcohol dehydrogenase-like protein C1198.01 (423 aa).

Residues 14–36 (KQLGHREVSEGSTQPKPDPSGAT) form a disordered region. Zn(2+) contacts are provided by Cys-74, His-97, Cys-127, Cys-130, Cys-133, and Cys-141.

The protein belongs to the zinc-containing alcohol dehydrogenase family. Class-III subfamily. The cofactor is Zn(2+).

It localises to the golgi apparatus. The polypeptide is Zinc-type alcohol dehydrogenase-like protein C1198.01 (Schizosaccharomyces pombe (strain 972 / ATCC 24843) (Fission yeast)).